We begin with the raw amino-acid sequence, 42 residues long: uncharacterized protein (42 aa).

Residues 20-42 (RSGRAERGVRAHSPAWSERPTPN) are disordered.

This is an uncharacterized protein from Escherichia coli.